The following is a 486-amino-acid chain: Cardiolipin synthase A (486 aa).

The next 2 helical transmembrane spans lie at 3–23 and 38–58; these read TFYT…IAGV and MAWL…YLSV. 2 PLD phosphodiesterase domains span residues 219–246 and 399–426; these read MDLR…VDPR and EGGL…DMRS. Residues His224, Lys226, Asp231, His404, Lys406, and Asp411 contribute to the active site.

The protein belongs to the phospholipase D family. Cardiolipin synthase subfamily. ClsA sub-subfamily.

The protein resides in the cell inner membrane. It carries out the reaction 2 a 1,2-diacyl-sn-glycero-3-phospho-(1'-sn-glycerol) = a cardiolipin + glycerol. Functionally, catalyzes the reversible phosphatidyl group transfer from one phosphatidylglycerol molecule to another to form cardiolipin (CL) (diphosphatidylglycerol) and glycerol. This Salmonella arizonae (strain ATCC BAA-731 / CDC346-86 / RSK2980) protein is Cardiolipin synthase A.